Here is a 234-residue protein sequence, read N- to C-terminus: DNA repair protein RecO (234 aa).

It belongs to the RecO family.

Functionally, involved in DNA repair and RecF pathway recombination. The polypeptide is DNA repair protein RecO (Halorhodospira halophila (strain DSM 244 / SL1) (Ectothiorhodospira halophila (strain DSM 244 / SL1))).